The primary structure comprises 417 residues: Tol-Pal system protein TolB (417 aa).

A signal peptide spans 1-16 (MRYLWLFLIGTIGLFA).

The protein belongs to the TolB family. The Tol-Pal system is composed of five core proteins: the inner membrane proteins TolA, TolQ and TolR, the periplasmic protein TolB and the outer membrane protein Pal. They form a network linking the inner and outer membranes and the peptidoglycan layer.

The protein resides in the periplasm. Functionally, part of the Tol-Pal system, which plays a role in outer membrane invagination during cell division and is important for maintaining outer membrane integrity. The protein is Tol-Pal system protein TolB of Helicobacter pylori (strain HPAG1).